A 326-amino-acid polypeptide reads, in one-letter code: Neuferricin homolog (326 aa).

The first 34 residues, 1-34, serve as a signal peptide directing secretion; that stretch reads MEKNRRKKDDAGVMTKTLAGVAALTFLVSFICSS. A Cytochrome b5 heme-binding domain is found at 98-197; that stretch reads KHVFTPEQLH…KEYPLVGVVA (100 aa).

The protein belongs to the cytochrome b5 family. MAPR subfamily.

It is found in the secreted. Heme-binding protein. The protein is Neuferricin homolog of Caenorhabditis briggsae.